The sequence spans 201 residues: Diadenylate cyclase CdaS (201 aa).

The 148-residue stretch at 54-201 folds into the DAC domain; sequence QTLAATYYIQ…LNGILYTISL (148 aa).

Belongs to the adenylate cyclase family. DacB/CdaS subfamily. As to quaternary structure, probably forms a homohexamer. It depends on Mg(2+) as a cofactor.

The enzyme catalyses 2 ATP = 3',3'-c-di-AMP + 2 diphosphate. Functionally, one of 3 paralogous diadenylate cyclases (DAC) in this bacteria catalyzing the condensation of 2 ATP molecules into cyclic di-AMP (c-di-AMP). It has slow DAC activity with ADP as a substrate and may have weak ADPase activity. Required for efficient spore formation, whereas in B.subtilis, it is required for efficient spore germination. It is produced under the control of different sigma factors in the two bacteria. It is also required for parasporal crystal formation. The chain is Diadenylate cyclase CdaS from Bacillus thuringiensis (strain BMB171).